A 421-amino-acid chain; its full sequence is Acetate kinase (421 aa).

Residue N7 participates in Mg(2+) binding. An ATP-binding site is contributed by K14. R91 contacts substrate. D148 serves as the catalytic Proton donor/acceptor. ATP-binding positions include 208 to 212 and 283 to 285; these read HIGNG and DRR. E387 is a binding site for Mg(2+).

It belongs to the acetokinase family. In terms of assembly, homodimer. The cofactor is Mg(2+). Mn(2+) serves as cofactor.

The protein resides in the cytoplasm. The catalysed reaction is acetate + ATP = acetyl phosphate + ADP. The protein operates within metabolic intermediate biosynthesis; acetyl-CoA biosynthesis; acetyl-CoA from acetate: step 1/2. Catalyzes the formation of acetyl phosphate from acetate and ATP. Can also catalyze the reverse reaction. In Geobacter metallireducens (strain ATCC 53774 / DSM 7210 / GS-15), this protein is Acetate kinase.